We begin with the raw amino-acid sequence, 186 residues long: Ribosome maturation factor RimP (186 aa).

It belongs to the RimP family.

The protein resides in the cytoplasm. In terms of biological role, required for maturation of 30S ribosomal subunits. This is Ribosome maturation factor RimP from Rhizorhabdus wittichii (strain DSM 6014 / CCUG 31198 / JCM 15750 / NBRC 105917 / EY 4224 / RW1) (Sphingomonas wittichii).